The primary structure comprises 201 residues: 3-isopropylmalate dehydratase small subunit (201 aa).

It belongs to the LeuD family. LeuD type 1 subfamily. In terms of assembly, heterodimer of LeuC and LeuD.

It catalyses the reaction (2R,3S)-3-isopropylmalate = (2S)-2-isopropylmalate. It functions in the pathway amino-acid biosynthesis; L-leucine biosynthesis; L-leucine from 3-methyl-2-oxobutanoate: step 2/4. Catalyzes the isomerization between 2-isopropylmalate and 3-isopropylmalate, via the formation of 2-isopropylmaleate. The protein is 3-isopropylmalate dehydratase small subunit of Brucella abortus (strain S19).